The chain runs to 499 residues: Dipeptide and tripeptide permease A (499 aa).

Topologically, residues 1 to 34 (MSTANKKPAESVSMNAFKQPRSFYLIFSIELWER) are cytoplasmic. Residues 35 to 55 (FGFYGLQGIMAVYLVKQLGMS) traverse the membrane as a helical segment. At 56–59 (EADS) the chain is on the periplasmic side. A helical membrane pass occupies residues 60–80 (ITLFSSFSALVYGLVAIGGWL). Over 81 to 89 (GDKVLGTKR) the chain is Cytoplasmic. A helical membrane pass occupies residues 90 to 110 (VIMLGTIVLAIGYALVAWSGH). Asp-111 is a topological domain (periplasmic). A helical transmembrane segment spans residues 112–132 (AAIVYFGMATIAVGNGLFKAN). Residues 133-153 (PSALLSTCYEKDDPRLDGAFT) are Cytoplasmic-facing. Residues 154-174 (MYYMAINIGSFFSMLATPWLA) form a helical membrane-spanning segment. Topologically, residues 175–178 (EKFG) are periplasmic. Residues 179–199 (WSVAFSLSFVGMLITLVNFIF) traverse the membrane as a helical segment. The Cytoplasmic portion of the chain corresponds to 200-217 (CKKWVKDYGSKPDFAPLH). A helical transmembrane segment spans residues 218-238 (VGKLLATIVGIVVLVAIATWL). The Periplasmic segment spans residues 239 to 246 (LHNQGIAR). Residues 247–267 (LVLGVVALGIVIIFAKEAFAM) form a helical membrane-spanning segment. Residues 268-274 (QGAARRK) lie on the Cytoplasmic side of the membrane. The chain crosses the membrane as a helical span at residues 275–295 (MIVAFILMLEAIVFFVLYQQM). Residues 296-320 (PTSLNFFAIRNVEHSILGIAFQPEQ) are Periplasmic-facing. Residues 321–341 (FQALNPFWIMIGSPILAAIYN) traverse the membrane as a helical segment. At 342–350 (KMGDRLPMP) the chain is on the cytoplasmic side. Residues 351–371 (FKFTIGMLLCSGAFLVLPLGA) traverse the membrane as a helical segment. The Periplasmic portion of the chain corresponds to 372-383 (KFASEAGIVSVN). Residues 384-404 (WLILSYALQSIGELMISGLGL) form a helical membrane-spanning segment. The Cytoplasmic portion of the chain corresponds to 405–414 (AMVAQLVPQR). Residues 415-435 (LMGFIMGSWFLTTAGAAMIAG) traverse the membrane as a helical segment. The Periplasmic segment spans residues 436–459 (KVANLMAVPENVSDPLQSLEVYGR). The helical transmembrane segment at 460-480 (VFMQIGIATGVIAVLMLLTAP) threads the bilayer. Residues 481–499 (LLNRMTQEDKPKETDTAHA) are Cytoplasmic-facing.

This sequence belongs to the major facilitator superfamily. Proton-dependent oligopeptide transporter (POT/PTR) (TC 2.A.17) family. DtpA subfamily.

It is found in the cell inner membrane. Its function is as follows. Proton-dependent permease that transports di- and tripeptides. The chain is Dipeptide and tripeptide permease A from Cronobacter turicensis (strain DSM 18703 / CCUG 55852 / LMG 23827 / z3032).